The sequence spans 535 residues: MNNARPIRRALLSVSDKTGILEFAKSLHAQGVELLSTGGTARLLADNGVPVIEVSDHTGHPEIMDGRVKTLHPKVHGGILARRGIDELVMEQNNIKPIDLVAVNLYPFAETVAKEGCTLADAVENIDIGGPTMVRSTAKNHKDTTIIVNAHDYDRVIAEMEANQGSTTLETRFDLAIAAFEHTAAYDGMIANYFGTKVPAHSQDECHERSLCAEDSKFPRTYNTQLVKKQDLRYGENSHQTAAFYVDTNIDEASVATAVQLQGKALSYNNIADTDSALECVKEFSEPACVIVKHANPCGVAIGENLLEAYNRAFQTDPTSAFGGIIAFNAELDAETAAAIVERQFVEVIIAPKVCQAARDVVAAKANVRLLECGEWANKTTSLDYKRVNGGLLLQDRDQGMVGLDEVKVVSKRQPTEAEMKDLMFCWKVAKFVKSNAIVYAKNSMTIGVGAGQMSRVYSAKVAGIKAADEGLEVQDSVMASDAFFPFRDGIDAAAAAGISCIIQPGGSIRDEEIIAAADEHGMAMVFTGMRHFRH.

The MGS-like domain maps to 1-148 (MNNARPIRRA…KNHKDTTIIV (148 aa)).

This sequence belongs to the PurH family.

The enzyme catalyses (6R)-10-formyltetrahydrofolate + 5-amino-1-(5-phospho-beta-D-ribosyl)imidazole-4-carboxamide = 5-formamido-1-(5-phospho-D-ribosyl)imidazole-4-carboxamide + (6S)-5,6,7,8-tetrahydrofolate. It carries out the reaction IMP + H2O = 5-formamido-1-(5-phospho-D-ribosyl)imidazole-4-carboxamide. Its pathway is purine metabolism; IMP biosynthesis via de novo pathway; 5-formamido-1-(5-phospho-D-ribosyl)imidazole-4-carboxamide from 5-amino-1-(5-phospho-D-ribosyl)imidazole-4-carboxamide (10-formyl THF route): step 1/1. It participates in purine metabolism; IMP biosynthesis via de novo pathway; IMP from 5-formamido-1-(5-phospho-D-ribosyl)imidazole-4-carboxamide: step 1/1. This is Bifunctional purine biosynthesis protein PurH from Shewanella woodyi (strain ATCC 51908 / MS32).